The sequence spans 195 residues: UPF0314 protein RHECIAT_CH0004233 (195 aa).

The next 4 helical transmembrane spans lie at 15-35 (FWFVACVAVLVAQIVTEYLMG), 64-84 (WYTPSHIIHGFLFYGLGYLIL), 127-147 (GDSILNSAMDTVFMCVGFFFA), and 150-170 (APVALTVAIAIFFEIFTGYVI).

It belongs to the UPF0314 family.

The protein localises to the cell membrane. This chain is UPF0314 protein RHECIAT_CH0004233, found in Rhizobium etli (strain CIAT 652).